The following is a 363-amino-acid chain: Protein MAK32 (363 aa).

This sequence to S.pombe SpAC4G8.14c.

Functionally, necessary for the structural stability of L-A double-stranded RNA-containing particles. Necessary for growth at 37 degrees Celsius as well as for maintenance of the killer plasmid. The protein is Protein MAK32 (MAK32) of Saccharomyces cerevisiae (strain ATCC 204508 / S288c) (Baker's yeast).